Consider the following 353-residue polypeptide: Ferrochelatase (353 aa).

Over residues 1–13 the composition is skewed to basic and acidic residues; it reads MTLERTGRDEEKA. The tract at residues 1 to 23 is disordered; it reads MTLERTGRDEEKALTQPPSGHSS. Positions 223 and 304 each coordinate Fe cation.

The protein belongs to the ferrochelatase family.

The protein resides in the cytoplasm. It carries out the reaction heme b + 2 H(+) = protoporphyrin IX + Fe(2+). Its pathway is porphyrin-containing compound metabolism; protoheme biosynthesis; protoheme from protoporphyrin-IX: step 1/1. In terms of biological role, catalyzes the ferrous insertion into protoporphyrin IX. The polypeptide is Ferrochelatase (Chelativorans sp. (strain BNC1)).